Reading from the N-terminus, the 92-residue chain is Small ribosomal subunit protein uS19 (92 aa).

It belongs to the universal ribosomal protein uS19 family.

Protein S19 forms a complex with S13 that binds strongly to the 16S ribosomal RNA. The sequence is that of Small ribosomal subunit protein uS19 from Desulfosudis oleivorans (strain DSM 6200 / JCM 39069 / Hxd3) (Desulfococcus oleovorans).